Here is a 278-residue protein sequence, read N- to C-terminus: Large ribosomal subunit protein uL2 (278 aa).

Disordered stretches follow at residues 28–56 (KPVK…GIAG) and 221–278 (RGVA…KKKR). Residues 269 to 278 (IRSRHAKKKR) are compositionally biased toward basic residues.

This sequence belongs to the universal ribosomal protein uL2 family. Part of the 50S ribosomal subunit. Forms a bridge to the 30S subunit in the 70S ribosome.

One of the primary rRNA binding proteins. Required for association of the 30S and 50S subunits to form the 70S ribosome, for tRNA binding and peptide bond formation. It has been suggested to have peptidyltransferase activity; this is somewhat controversial. Makes several contacts with the 16S rRNA in the 70S ribosome. This chain is Large ribosomal subunit protein uL2, found in Rhizorhabdus wittichii (strain DSM 6014 / CCUG 31198 / JCM 15750 / NBRC 105917 / EY 4224 / RW1) (Sphingomonas wittichii).